A 67-amino-acid polypeptide reads, in one-letter code: Conotoxin AbVIN (67 aa).

An N-terminal signal peptide occupies residues Val-1–Thr-17. Residues Ala-18–Ser-40 constitute a propeptide that is removed on maturation. 3 cysteine pairs are disulfide-bonded: Cys-43–Cys-57, Cys-50–Cys-61, and Cys-56–Cys-66.

Belongs to the conotoxin O1 superfamily. As to expression, expressed by the venom duct.

It localises to the secreted. This chain is Conotoxin AbVIN, found in Conus abbreviatus (Abbreviated cone).